The primary structure comprises 2472 residues: Spectrin alpha chain, non-erythrocytic 1 (2472 aa).

Met-1 bears the N-acetylmethionine mark. Spectrin repeat units lie at residues 45–146 (RFQF…IKLL), 150–251 (KLVQ…QGKL), 256–358 (EVQR…ARLD), 361–465 (YRLQ…QYEQ), 468–570 (DLQL…AQLA), 574–676 (HLQQ…KLRE), 679–781 (QQQQ…QKLA), 785–888 (RLQQ…DLED), and 891–961 (QAQQ…QQVA). The residue at position 587 (Ser-587) is a Phosphoserine. Lys-637 bears the N6-acetyllysine mark. At Lys-803 the chain carries N6-acetyllysine. 6 positions are modified to phosphoserine: Ser-924, Ser-982, Ser-999, Ser-1029, Ser-1031, and Ser-1041. An SH3 domain is found at 967–1026 (TGKELVLALYDYQEKSPREVTMKKGDILTLLNSTNKDWWKVEVNDRQGFVPAAYVKKLDP). One copy of the Spectrin 10 repeat lies at 1096–1166 (LFREANELQQ…LESEGLMAEE (71 aa)). Position 1176 is a phosphotyrosine (Tyr-1176). Ser-1190, Ser-1207, Ser-1217, Ser-1291, Ser-1306, Ser-1323, and Ser-1338 each carry phosphoserine. One copy of the Spectrin 11 repeat lies at 1233–1336 (HEVQRFHRDA…RADQRKAKLG (104 aa)). Spectrin repeat units follow at residues 1339 to 1441 (HDLQ…RMML) and 1446 to 1549 (ELQL…KLGE). Residue Lys-1519 is modified to N6-acetyllysine. Phosphoserine occurs at positions 1550, 1557, 1578, 1615, and 1647. 7 Spectrin repeats span residues 1552–1656 (TLQQ…KLKE), 1659–1762 (KQQN…KLSE), 1764–1868 (HRLH…RLEE), 1871–1974 (EYQQ…KLDE), 1978–2081 (FLQF…KLLE), 2092–2194 (LFLT…LELQ), and 2206–2310 (LRQE…NLEQ). Thr-2020 carries the phosphothreonine modification. An N6-acetyllysine modification is found at Lys-2052. Thr-2066 carries the post-translational modification Phosphothreonine. EF-hand domains are found at residues 2323 to 2358 (EALKEFSMMFKHFDKDKSGRLNHQEFKSCLRSLGYD), 2366 to 2401 (EPDPEFEAILDTVDPNRDGHVSLQEYMAFMISRETE), and 2404 to 2439 (KSSEEIESAFRALSSEGKPYVTKEELYQNLTREQAD). Residues Asp-2336, Asp-2338, Ser-2340, Arg-2342, Glu-2347, Asp-2379, Asn-2381, Asp-2383, His-2385, and Glu-2390 each contribute to the Ca(2+) site. Lys-2421 is subject to N6-acetyllysine.

This sequence belongs to the spectrin family. In terms of assembly, like erythrocyte spectrin, the spectrin-like proteins are capable of forming dimers which can further associate to tetramers. Interacts (via C-terminal spectrin repeats) with TRPC4. Interacts with CALM and EMD. Interacts with isoform 1 of ACP1. Identified in a complex with ACTN4, CASK, IQGAP1, MAGI2, NPHS1 and SPTBN1. Interacts with SHANK3 (via ANK repeats). Interacts with CLN3; this interaction regulates the fodrin localization at the plasma membrane. Phosphorylation of Tyr-1176 decreases sensitivity to cleavage by calpain in vitro.

The protein localises to the cytoplasm. The protein resides in the cytoskeleton. Its subcellular location is the cell cortex. In terms of biological role, fodrin, which seems to be involved in secretion, interacts with calmodulin in a calcium-dependent manner and is thus candidate for the calcium-dependent movement of the cytoskeleton at the membrane. The sequence is that of Spectrin alpha chain, non-erythrocytic 1 (Sptan1) from Mus musculus (Mouse).